Reading from the N-terminus, the 336-residue chain is Atypical chemokine receptor 1 (336 aa).

At 1 to 63 (MGNCLHQAEL…CNLLDDSSLP (63 aa)) the chain is on the extracellular side. N-linked (GlcNAc...) asparagine glycosylation is found at asparagine 16 and asparagine 33. 2 cysteine pairs are disulfide-bonded: cysteine 51/cysteine 276 and cysteine 129/cysteine 195. A helical transmembrane segment spans residues 64–84 (FFILASVLGILASSTVLFMLF). Over 85–95 (RPLFRWQLCPG) the chain is Cytoplasmic. The helical transmembrane segment at 96-116 (WPVLAQLAVGSALFSIVVPIL) threads the bilayer. Topologically, residues 117-129 (APGLGNTRSSALC) are extracellular. The chain crosses the membrane as a helical span at residues 130-153 (SLGYCVWYGSAFAQALLLGCHASL). Residues 154–166 (GPKLGAGQVPGLT) lie on the Cytoplasmic side of the membrane. A helical membrane pass occupies residues 167–187 (LGLTVGLWGAAALLTVPITLA). Residues 188-207 (SGASDGLCTPIYSTELKALQ) are Extracellular-facing. Residues 208-228 (ATHTVACFAIFVLLPLGLFGA) form a helical membrane-spanning segment. The Cytoplasmic portion of the chain corresponds to 229–244 (KGVKKALGMGPGPWMT). The helical transmembrane segment at 245–265 (ILWIWFIFWWPHGVVLGLDFL) threads the bilayer. Residues 266–287 (VRSKLLLLPTCLAQQVLDLLLN) lie on the Extracellular side of the membrane. A helical transmembrane segment spans residues 288–308 (LAEALTIVHCVATPLLLALFC). Residues 309–336 (HQATRTLLPSLPLPERWSSPVDTLGSKS) lie on the Cytoplasmic side of the membrane.

It belongs to the G-protein coupled receptor 1 family. Atypical chemokine receptor subfamily.

It is found in the early endosome. It localises to the recycling endosome. The protein localises to the membrane. Functionally, atypical chemokine receptor that controls chemokine levels and localization via high-affinity chemokine binding that is uncoupled from classic ligand-driven signal transduction cascades, resulting instead in chemokine sequestration, degradation, or transcytosis. Also known as interceptor (internalizing receptor) or chemokine-scavenging receptor or chemokine decoy receptor. Has a promiscuous chemokine-binding profile, interacting with inflammatory chemokines of both the CXC and the CC subfamilies but not with homeostatic chemokines. Acts as a receptor for chemokines including CCL2, CCL5, CCL7, CCL11, CCL13, CCL14, CCL17, CXCL5, CXCL6, IL8/CXCL8, CXCL11, GRO, RANTES, MCP-1 and TARC. May regulate chemokine bioavailability and, consequently, leukocyte recruitment through two distinct mechanisms: when expressed in endothelial cells, it sustains the abluminal to luminal transcytosis of tissue-derived chemokines and their subsequent presentation to circulating leukocytes; when expressed in erythrocytes, serves as blood reservoir of cognate chemokines but also as a chemokine sink, buffering potential surges in plasma chemokine levels. This chain is Atypical chemokine receptor 1 (ACKR1), found in Sapajus apella (Brown-capped capuchin).